We begin with the raw amino-acid sequence, 429 residues long: Glycine betaine monooxygenase oxygenase subunit (429 aa).

Positions tryptophan 56–isoleucine 163 constitute a Rieske domain. Cysteine 98, histidine 100, cysteine 118, and histidine 121 together coordinate [2Fe-2S] cluster. Fe cation contacts are provided by histidine 217 and histidine 222.

This sequence belongs to the bacterial ring-hydroxylating dioxygenase alpha subunit family. As to quaternary structure, the system is composed of an oxygenase subunit (GbcA) and a reductase subunit (GbcB). [2Fe-2S] cluster is required as a cofactor. Requires Fe cation as cofactor.

It catalyses the reaction glycine betaine + NADH + O2 + H(+) = N,N-dimethylglycine + formaldehyde + NAD(+) + H2O. Functionally, involved in degradation of glycine betaine. Part of a Rieske-type oxygenase system that catalyzes the conversion of glycine betaine (GB) to dimethylglycine (DMG). This subunit is the terminal oxygenase component of the system. Required for growth on choline and GB, but not for growth on DMG. The protein is Glycine betaine monooxygenase oxygenase subunit of Pseudomonas aeruginosa (strain ATCC 15692 / DSM 22644 / CIP 104116 / JCM 14847 / LMG 12228 / 1C / PRS 101 / PAO1).